The following is a 286-amino-acid chain: 5'-3' exonuclease (286 aa).

Residues 172-270 (IKPKEFIDFL…IKLKDIILKK (99 aa)) form the 5'-3' exonuclease domain.

Its function is as follows. 5'-3' exonuclease acting preferentially on double-stranded DNA. This is 5'-3' exonuclease from Buchnera aphidicola subsp. Acyrthosiphon pisum (strain APS) (Acyrthosiphon pisum symbiotic bacterium).